The following is a 544-amino-acid chain: MAMNSKRKTPPGIALLRRVRGRNWSPKTFRYAILFITFIAYACYHASRKPSSIVKSVLHPDSSTKPPQEHNSDKIYPWPMGNVFVKREIGDIDEVLLHRKSKGWEPFNGKDGTSRLGEIDVAFLACYSIGMYVAGHLGDSLDLRLFLTWGMIGSGFFVGLFGMGYFWNIHAFWFFLVMQMAAGLFQATGWPSVVAVVGNWFGKRKRGLIMGIWNAHTSVGNICGSLIAAGVLEYGWGWSFIAPGFVMSLGGVLVYLFLAAYPEDVGFPDINSNSGKFIKRKRDVEEEEEEVEEDLGTDVEGDGEGSSGSGSGYENKRSVGLLQACMIPGVIPFALCLFFSKLVAYTFLYWLPFYLSQTTIGGEYVSVKTAGNLSTLFDVGGIVGGILCGYISDKFKARATTAAAFMYAAIPAMLVYHSYGGVSQTVNILLMMVAGLFVNGPYALITTAVSADLGTHKSLQGDSRALATVTAIIDGTGSAGAALGPLLTGFLSTLGWQAVFYMLVVGALCAGLLLTRLVIAEIREKLGYVDEEVPASEPLLTDRR.

6 consecutive transmembrane segments (helical) span residues 28 to 47 (TFRY…YHAS), 121 to 141 (VAFL…GDSL), 156 to 176 (FFVG…WFFL), 181 to 201 (AAGL…GNWF), 218 to 238 (SVGN…GWGW), and 240 to 260 (FIAP…FLAA). Residues 281 to 313 (KRDVEEEEEEVEEDLGTDVEGDGEGSSGSGSGY) form a disordered region. The span at 285 to 303 (EEEEEEVEEDLGTDVEGDG) shows a compositional bias: acidic residues. The next 7 membrane-spanning stretches (helical) occupy residues 319–339 (VGLL…CLFF), 342–362 (LVAY…TIGG), 371–391 (GNLS…CGYI), 402–422 (AAAF…YGGV), 428–448 (ILLM…ITTA), 471–491 (AIID…TGFL), and 494–514 (LGWQ…GLLL).

It belongs to the major facilitator superfamily. Organophosphate:Pi antiporter (OPA) (TC 2.A.1.4) family.

The protein localises to the membrane. The sequence is that of Putative glycerol-3-phosphate transporter 4 from Arabidopsis thaliana (Mouse-ear cress).